We begin with the raw amino-acid sequence, 91 residues long: Large ribosomal subunit protein eL43 (91 aa).

The C4-type zinc-finger motif lies at 38–59 (CNFCGKDSLKRKAAGIWECKAC).

This sequence belongs to the eukaryotic ribosomal protein eL43 family.

In Schistosoma mansoni (Blood fluke), this protein is Large ribosomal subunit protein eL43.